The primary structure comprises 426 residues: Serine--tRNA ligase (426 aa).

Positions 103 to 129 (VPNLPDDSVPTGKDENDNPEIRRWGTP) are disordered. Basic and acidic residues predominate over residues 114–125 (GKDENDNPEIRR). Position 230–232 (230–232 (TAE)) interacts with L-serine. 261–263 (RSE) is a binding site for ATP. Residue Glu-284 coordinates L-serine. Position 348-351 (348-351 (EISS)) interacts with ATP. Ser-384 is an L-serine binding site.

The protein belongs to the class-II aminoacyl-tRNA synthetase family. Type-1 seryl-tRNA synthetase subfamily. As to quaternary structure, homodimer. The tRNA molecule binds across the dimer.

It is found in the cytoplasm. The catalysed reaction is tRNA(Ser) + L-serine + ATP = L-seryl-tRNA(Ser) + AMP + diphosphate + H(+). It catalyses the reaction tRNA(Sec) + L-serine + ATP = L-seryl-tRNA(Sec) + AMP + diphosphate + H(+). The protein operates within aminoacyl-tRNA biosynthesis; selenocysteinyl-tRNA(Sec) biosynthesis; L-seryl-tRNA(Sec) from L-serine and tRNA(Sec): step 1/1. In terms of biological role, catalyzes the attachment of serine to tRNA(Ser). Is also able to aminoacylate tRNA(Sec) with serine, to form the misacylated tRNA L-seryl-tRNA(Sec), which will be further converted into selenocysteinyl-tRNA(Sec). In Dichelobacter nodosus (strain VCS1703A), this protein is Serine--tRNA ligase.